The chain runs to 201 residues: UPF0376 protein F10G2.1 (201 aa).

The Cytoplasmic segment spans residues 1–3 (MKH). Residues 4–24 (FLLLAIIGILFLGSTYGASVA) traverse the membrane as a helical; Signal-anchor for type II membrane protein segment. The Extracellular portion of the chain corresponds to 25-201 (TEKLKASNCT…LLECDFRNIQ (177 aa)). N-linked (GlcNAc...) asparagine glycans are attached at residues N32 and N124.

Belongs to the UPF0376 family.

The protein localises to the membrane. The polypeptide is UPF0376 protein F10G2.1 (Caenorhabditis elegans).